Here is a 497-residue protein sequence, read N- to C-terminus: Zinc finger CCCH domain-containing protein 22 (497 aa).

The C3H1-type zinc finger occupies 136–163 (SESMMICKFFMQQRCRFGSSCRSSHGLD). The tract at residues 236–281 (AQMTDDDGEEEEEEDEQQSASDSEDSVSSDYDEGSPQGIGFLESTN) is disordered. Residues 239–268 (TDDDGEEEEEEDEQQSASDSEDSVSSDYDE) are compositionally biased toward acidic residues. Residues 300–346 (TRGIASKMMASMGYREGMGLGVSGQGILNPILVKVLPAKRSLDYALE) enclose the G-patch domain. The interval 352-387 (ECKSEKQKKKRSRGGKRKRGKKFAEAAKAAKQEEES) is disordered. The segment covering 357–372 (KQKKKRSRGGKRKRGK) has biased composition (basic residues). A compositionally biased stretch (basic and acidic residues) spans 373–387 (KFAEAAKAAKQEEES).

The protein is Zinc finger CCCH domain-containing protein 22 of Arabidopsis thaliana (Mouse-ear cress).